The sequence spans 197 residues: Imidazoleglycerol-phosphate dehydratase (197 aa).

The protein belongs to the imidazoleglycerol-phosphate dehydratase family.

Its subcellular location is the cytoplasm. It catalyses the reaction D-erythro-1-(imidazol-4-yl)glycerol 3-phosphate = 3-(imidazol-4-yl)-2-oxopropyl phosphate + H2O. The protein operates within amino-acid biosynthesis; L-histidine biosynthesis; L-histidine from 5-phospho-alpha-D-ribose 1-diphosphate: step 6/9. The sequence is that of Imidazoleglycerol-phosphate dehydratase from Rhodopseudomonas palustris (strain ATCC BAA-98 / CGA009).